Consider the following 113-residue polypeptide: Hydrogenase maturation factor HypA (113 aa).

His-2 is a Ni(2+) binding site. Cys-73, Cys-76, Cys-89, and Cys-92 together coordinate Zn(2+).

The protein belongs to the HypA/HybF family.

Its function is as follows. Involved in the maturation of [NiFe] hydrogenases. Required for nickel insertion into the metal center of the hydrogenase. The sequence is that of Hydrogenase maturation factor HypA from Aeromonas salmonicida (strain A449).